A 306-amino-acid chain; its full sequence is Pantothenate kinase (306 aa).

An ATP-binding site is contributed by 91–98 (GSVAVGKS).

Belongs to the prokaryotic pantothenate kinase family.

Its subcellular location is the cytoplasm. The catalysed reaction is (R)-pantothenate + ATP = (R)-4'-phosphopantothenate + ADP + H(+). It functions in the pathway cofactor biosynthesis; coenzyme A biosynthesis; CoA from (R)-pantothenate: step 1/5. The chain is Pantothenate kinase from Streptococcus thermophilus (strain CNRZ 1066).